A 318-amino-acid polypeptide reads, in one-letter code: HPr kinase/phosphorylase (318 aa).

Catalysis depends on residues histidine 146 and lysine 167. An ATP-binding site is contributed by 161 to 168 (GESGLGKS). Residue serine 168 coordinates Mg(2+). The active-site Proton acceptor; for phosphorylation activity. Proton donor; for dephosphorylation activity is aspartate 185. An important for the catalytic mechanism of both phosphorylation and dephosphorylation region spans residues 209 to 218 (LEVRGIGLLD). Mg(2+) is bound at residue glutamate 210. Arginine 252 is an active-site residue. Residues 273–278 (QVVAGR) are important for the catalytic mechanism of dephosphorylation.

It belongs to the HPrK/P family. In terms of assembly, homohexamer. Requires Mg(2+) as cofactor.

It carries out the reaction [HPr protein]-L-serine + ATP = [HPr protein]-O-phospho-L-serine + ADP + H(+). The catalysed reaction is [HPr protein]-O-phospho-L-serine + phosphate + H(+) = [HPr protein]-L-serine + diphosphate. Catalyzes the ATP- as well as the pyrophosphate-dependent phosphorylation of a specific serine residue in HPr, a phosphocarrier protein of the phosphoenolpyruvate-dependent sugar phosphotransferase system (PTS). HprK/P also catalyzes the pyrophosphate-producing, inorganic phosphate-dependent dephosphorylation (phosphorolysis) of seryl-phosphorylated HPr (P-Ser-HPr). This is HPr kinase/phosphorylase from Verminephrobacter eiseniae (strain EF01-2).